A 181-amino-acid polypeptide reads, in one-letter code: ADP-ribosylation factor 1 (181 aa).

Gly2 is lipidated: N-myristoyl glycine. Residues 24-31 (GLDAAGKT), 67-71 (DVGGQ), and 126-129 (NKQD) contribute to the GTP site.

This sequence belongs to the small GTPase superfamily. Arf family. In terms of assembly, interacts with AGD7 and GDAP1. GDP-locked form interacts with cytosolic tail of p24 proteins. Interacts with AGD5 at trans-Golgi network. Interacts with A.tumefaciens AK6b.

Its subcellular location is the golgi apparatus. The protein localises to the endosome. It is found in the trans-Golgi network. The protein resides in the early endosome. The catalysed reaction is GTP + H2O = GDP + phosphate + H(+). Its activity is regulated as follows. Activated by AGD7 and AGD10. GTP-binding protein involved in protein trafficking; required for the sequence-specific vacuolar sorting route to the lytic vacuole, for the ER-to-Golgi transport and for the Golgi-derived transport to the plasma membrane. Involved in the recruitment of COPI and GDAP1 to membranes. Required for recycling of PIN auxin transporters (e.g. PIN1 and PIN2) in a fungal toxin brefeldin A (BFA)-dependent manner. Involved in various auxin-dependent developmental processes. This is ADP-ribosylation factor 1 from Arabidopsis thaliana (Mouse-ear cress).